We begin with the raw amino-acid sequence, 637 residues long: Anthranilate synthase, phenazine specific (637 aa).

The interval Met1–Ser434 is anthranilate synthase component I. Residues Gln437–Val628 form the Glutamine amidotransferase type-1 domain. Catalysis depends on for GATase activity residues Cys517, His602, and Glu604.

It catalyses the reaction chorismate + L-glutamine = anthranilate + pyruvate + L-glutamate + H(+). It functions in the pathway antibiotic biosynthesis; phenazine biosynthesis. Involved in the biosynthesis of the antibiotic, phenazine, a nitrogen-containing heterocyclic molecule having important roles in virulence, competition and biological control. In Pseudomonas chlororaphis (Pseudomonas aureofaciens), this protein is Anthranilate synthase, phenazine specific (phzB).